Here is a 291-residue protein sequence, read N- to C-terminus: Formamidopyrimidine-DNA glycosylase (291 aa).

Pro-2 acts as the Schiff-base intermediate with DNA in catalysis. Glu-3 functions as the Proton donor in the catalytic mechanism. The active-site Proton donor; for beta-elimination activity is Lys-58. The DNA site is built by His-104, Arg-123, and Lys-166. The FPG-type zinc-finger motif lies at 257-291; the sequence is KVYDREGKPCPTCGGTVQRFVQNGRSTFWCPKCQK. The active-site Proton donor; for delta-elimination activity is the Arg-281.

This sequence belongs to the FPG family. As to quaternary structure, monomer. The cofactor is Zn(2+).

It carries out the reaction Hydrolysis of DNA containing ring-opened 7-methylguanine residues, releasing 2,6-diamino-4-hydroxy-5-(N-methyl)formamidopyrimidine.. The catalysed reaction is 2'-deoxyribonucleotide-(2'-deoxyribose 5'-phosphate)-2'-deoxyribonucleotide-DNA = a 3'-end 2'-deoxyribonucleotide-(2,3-dehydro-2,3-deoxyribose 5'-phosphate)-DNA + a 5'-end 5'-phospho-2'-deoxyribonucleoside-DNA + H(+). In terms of biological role, involved in base excision repair of DNA damaged by oxidation or by mutagenic agents. Acts as a DNA glycosylase that recognizes and removes damaged bases. Has a preference for oxidized purines, such as 7,8-dihydro-8-oxoguanine (8-oxoG). Has AP (apurinic/apyrimidinic) lyase activity and introduces nicks in the DNA strand. Cleaves the DNA backbone by beta-delta elimination to generate a single-strand break at the site of the removed base with both 3'- and 5'-phosphates. The polypeptide is Formamidopyrimidine-DNA glycosylase (Rhodopseudomonas palustris (strain TIE-1)).